A 174-amino-acid chain; its full sequence is Shikimate kinase 2 (174 aa).

An ATP-binding site is contributed by 12–17 (GAGKTT). Mg(2+) is bound by residues Thr16 and Asp32. 3 residues coordinate substrate: Asp34, Arg58, and Gly79. An LID domain region spans residues 112–126 (AEDPEEAQRPSLTGK). An ATP-binding site is contributed by Arg120. Arg139 is a substrate binding site. An ATP-binding site is contributed by Gln155.

The protein belongs to the shikimate kinase family. AroL subfamily. In terms of assembly, monomer. Mg(2+) is required as a cofactor.

It is found in the cytoplasm. It carries out the reaction shikimate + ATP = 3-phosphoshikimate + ADP + H(+). Its pathway is metabolic intermediate biosynthesis; chorismate biosynthesis; chorismate from D-erythrose 4-phosphate and phosphoenolpyruvate: step 5/7. Catalyzes the specific phosphorylation of the 3-hydroxyl group of shikimic acid using ATP as a cosubstrate. The sequence is that of Shikimate kinase 2 from Yersinia pestis bv. Antiqua (strain Antiqua).